The chain runs to 300 residues: 17-beta-hydroxysteroid dehydrogenase 13 (300 aa).

An N-terminal signal peptide occupies residues M1–L19. S33 bears the Phosphoserine mark. L40 to D67 contacts NAD(+). S172 lines the substrate pocket. The active-site Proton acceptor is Y185. K189 provides a ligand contact to NAD(+).

Belongs to the short-chain dehydrogenases/reductases (SDR) family. In terms of tissue distribution, highly expressed in the liver. Also detected in ovary, bone marrow, kidney, brain, lung, skeletal muscle, bladder and testis.

Its subcellular location is the lipid droplet. It is found in the endoplasmic reticulum. It localises to the cytoplasm. The catalysed reaction is 17beta-estradiol + NAD(+) = estrone + NADH + H(+). It carries out the reaction all-trans-retinol + NAD(+) = all-trans-retinal + NADH + H(+). The enzyme catalyses all-trans-retinal + NAD(+) + H2O = all-trans-retinoate + NADH + 2 H(+). Its function is as follows. Plays a pivotal role in hepatic lipid metabolism. In vitro, it catalyzes the oxidation of a variety of lipid substrates, including 17beta-estradiol, retinol, retinal, and leukotriene B4. Has retinol/retinal dehydrogenase activity in vitro. In terms of biological role, does not have retinol/retinal dehydrogenase activity in vitro. This is 17-beta-hydroxysteroid dehydrogenase 13 from Homo sapiens (Human).